A 183-amino-acid polypeptide reads, in one-letter code: Adenine phosphoribosyltransferase (183 aa).

It belongs to the purine/pyrimidine phosphoribosyltransferase family. Homodimer.

Its subcellular location is the cytoplasm. It catalyses the reaction AMP + diphosphate = 5-phospho-alpha-D-ribose 1-diphosphate + adenine. It functions in the pathway purine metabolism; AMP biosynthesis via salvage pathway; AMP from adenine: step 1/1. Functionally, catalyzes a salvage reaction resulting in the formation of AMP, that is energically less costly than de novo synthesis. The sequence is that of Adenine phosphoribosyltransferase from Salmonella heidelberg (strain SL476).